A 380-amino-acid chain; its full sequence is WAT1-related protein At2g37460 (380 aa).

The next 10 membrane-spanning stretches (helical) occupy residues 16 to 36 (FISM…SKAV), 45 to 65 (VLVV…AFYF), 71 to 91 (PKMT…EPVI), 107 to 127 (FATA…YIFG), 142 to 162 (VVGT…KGPV), 187 to 207 (GAVL…LQAI), 216 to 236 (LSLT…VALV), 254 to 274 (LTAT…GGVV), 282 to 302 (FVTA…TIIF), and 306 to 326 (MYLG…LVIW). The EamA 1 domain occupies 27-134 (AGMDILSKAV…IFGLERVKLR (108 aa)). Residues 196–325 (FSYACFMILQ…VICAGLYLVI (130 aa)) form the EamA 2 domain.

Belongs to the drug/metabolite transporter (DMT) superfamily. Plant drug/metabolite exporter (P-DME) (TC 2.A.7.4) family.

It is found in the membrane. In Arabidopsis thaliana (Mouse-ear cress), this protein is WAT1-related protein At2g37460.